A 100-amino-acid polypeptide reads, in one-letter code: uncharacterized protein (100 aa).

This is an uncharacterized protein from Acheta domesticus (House cricket).